Consider the following 547-residue polypeptide: uncharacterized protein (547 aa).

A disordered region spans residues 1–37 (MSAASSAIPKRSDPRLLDQKKSAKSTLPKNTPENGVS). Over residues 10-21 (KRSDPRLLDQKK) the composition is skewed to basic and acidic residues. The span at 24-37 (KSTLPKNTPENGVS) shows a compositional bias: polar residues. 2 C3H1-type zinc fingers span residues 41 to 67 (NLQHVPCKFFRNGTCTAGENCPFSHSL) and 68 to 95 (ETERPICKYFLKGNCKFGPKCALSHALP). Residues 132–176 (SPSLSSKTMKNPADKANNTTATDVRGNTATSPYFPFSRSPGRHSG) form a disordered region. Residues 147 to 162 (ANNTTATDVRGNTATS) show a composition bias toward polar residues. Position 343 is a phosphoserine (S343). Y344 carries the phosphotyrosine modification. Residues S353, S355, S483, S489, S495, and S499 each carry the phosphoserine modification. Phosphothreonine is present on T502. Positions 526–536 (VANSSPPWNST) are enriched in polar residues. Positions 526–547 (VANSSPPWNSTVEEETPFQMDD) are disordered. Acidic residues predominate over residues 537-547 (VEEETPFQMDD).

This is an uncharacterized protein from Schizosaccharomyces pombe (strain 972 / ATCC 24843) (Fission yeast).